We begin with the raw amino-acid sequence, 612 residues long: UvrABC system protein C (612 aa).

The GIY-YIG domain occupies 20-98; sequence THSGVYRMLD…IKQHRPKYNI (79 aa). The UVR domain maps to 208-243; that stretch reads STVLEEISAKMYQASEDMEYEKAQVYRDQLVVLRKL.

The protein belongs to the UvrC family. As to quaternary structure, interacts with UvrB in an incision complex.

The protein resides in the cytoplasm. In terms of biological role, the UvrABC repair system catalyzes the recognition and processing of DNA lesions. UvrC both incises the 5' and 3' sides of the lesion. The N-terminal half is responsible for the 3' incision and the C-terminal half is responsible for the 5' incision. In Francisella tularensis subsp. novicida (strain U112), this protein is UvrABC system protein C.